A 625-amino-acid chain; its full sequence is UvrABC system protein C (625 aa).

The region spanning 13–92 is the GIY-YIG domain; the sequence is DKPGVYIMKD…IKKHRPKFNI (80 aa). In terms of domain architecture, UVR spans 204–239; it reads EDIIKKLEKDMKEAADNLEFERAARIRDKINSLKHI.

The protein belongs to the UvrC family. In terms of assembly, interacts with UvrB in an incision complex.

It localises to the cytoplasm. The UvrABC repair system catalyzes the recognition and processing of DNA lesions. UvrC both incises the 5' and 3' sides of the lesion. The N-terminal half is responsible for the 3' incision and the C-terminal half is responsible for the 5' incision. In Acetivibrio thermocellus (strain ATCC 27405 / DSM 1237 / JCM 9322 / NBRC 103400 / NCIMB 10682 / NRRL B-4536 / VPI 7372) (Clostridium thermocellum), this protein is UvrABC system protein C.